A 656-amino-acid chain; its full sequence is uncharacterized protein (656 aa).

2 disordered regions span residues 1 to 41 and 60 to 88; these read MMAT…ESEG and SNKVEKDSDSEQRGRKKETTGPNNYHNLE. A compositionally biased stretch (low complexity) spans 22–36; the sequence is SDSSDSGSDVSFFSV. The residue at position 39 (serine 39) is a Phosphoserine. A compositionally biased stretch (basic and acidic residues) spans 62-78; the sequence is KVEKDSDSEQRGRKKET.

The protein localises to the cytoplasm. It localises to the mitochondrion. This is an uncharacterized protein from Saccharomyces cerevisiae (strain ATCC 204508 / S288c) (Baker's yeast).